Reading from the N-terminus, the 1228-residue chain is DNA-directed RNA polymerase subunit beta (1228 aa).

This sequence belongs to the RNA polymerase beta chain family. The RNAP catalytic core consists of 2 alpha, 1 beta, 1 beta' and 1 omega subunit. When a sigma factor is associated with the core the holoenzyme is formed, which can initiate transcription.

It catalyses the reaction RNA(n) + a ribonucleoside 5'-triphosphate = RNA(n+1) + diphosphate. DNA-dependent RNA polymerase catalyzes the transcription of DNA into RNA using the four ribonucleoside triphosphates as substrates. The chain is DNA-directed RNA polymerase subunit beta from Leptospira biflexa.